We begin with the raw amino-acid sequence, 367 residues long: Aflatoxin B1 aldehyde reductase member 2 (367 aa).

The segment covering 1–31 (MLRAASRAVGRAAVRSAQRSGTSVGRPLAMS) has biased composition (low complexity). Residues 1-45 (MLRAASRAVGRAAVRSAQRSGTSVGRPLAMSRPPPPRAASGAPLR) are disordered. A mitochondrion-targeting transit peptide spans 1 to 46 (MLRAASRAVGRAAVRSAQRSGTSVGRPLAMSRPPPPRAASGAPLRP). Serine 40 bears the Phosphoserine mark. Threonine 48 is subject to Phosphothreonine. Aspartate 80 contacts NADP(+). Tyrosine 85 functions as the Proton donor in the catalytic mechanism. Lysine 136 is subject to N6-acetyllysine. Histidine 149 contacts substrate. NADP(+)-binding positions include 179–180 (SN), glutamine 205, 234–244 (NPLAGGLLTGK), and arginine 258. Lysine 244 carries the N6-succinyllysine modification. Residues tyrosine 268 and arginine 271 each contribute to the substrate site. 326–334 (SSLEQLEQN) contributes to the NADP(+) binding site. Arginine 367 provides a ligand contact to substrate.

It belongs to the aldo/keto reductase family. Aldo/keto reductase 2 subfamily. As to quaternary structure, homodimer. In terms of tissue distribution, expressed in liver, kidney, testis and brain with low levels in skeletal muscle, spleen, heart and lung.

It localises to the mitochondrion. Its subcellular location is the golgi apparatus. It is found in the cytoplasm. The enzyme catalyses 4-hydroxybutanoate + NADP(+) = succinate semialdehyde + NADPH + H(+). Its activity is regulated as follows. Inhibited by citrate, succinate and tartrate. In terms of biological role, catalyzes the NADPH-dependent reduction of succinic semialdehyde to gamma-hydroxybutyrate. May have an important role in producing the neuromodulator gamma-hydroxybutyrate (GHB). Has broad substrate specificity. Can reduce the dialdehyde protein-binding form of aflatoxin B1 (AFB1) to the non-binding AFB1 dialcohol. May be involved in protection of liver against the toxic and carcinogenic effects of AFB1, a potent hepatocarcinogen. This Mus musculus (Mouse) protein is Aflatoxin B1 aldehyde reductase member 2.